Here is a 425-residue protein sequence, read N- to C-terminus: Adenosylhomocysteinase (425 aa).

The substrate site is built by T60, D132, and E157. 158 to 160 is a binding site for NAD(+); that stretch reads TTT. Substrate-binding residues include K187 and D191. Residues N192, 221–226, E244, N279, 300–302, and N347 contribute to the NAD(+) site; these read GYGWCG and SGH.

This sequence belongs to the adenosylhomocysteinase family. It depends on NAD(+) as a cofactor.

It localises to the cytoplasm. It catalyses the reaction S-adenosyl-L-homocysteine + H2O = L-homocysteine + adenosine. It participates in amino-acid biosynthesis; L-homocysteine biosynthesis; L-homocysteine from S-adenosyl-L-homocysteine: step 1/1. May play a key role in the regulation of the intracellular concentration of adenosylhomocysteine. The polypeptide is Adenosylhomocysteinase (Nostoc sp. (strain PCC 7120 / SAG 25.82 / UTEX 2576)).